We begin with the raw amino-acid sequence, 626 residues long: NAD-dependent malic enzyme, mitochondrial (626 aa).

Residues 1-34 (MAIFSNQMRLSSTLLKRLHQRVAAAVNSSSSRNF) constitute a mitochondrion transit peptide. R91 and R125 together coordinate fumarate. The active-site Proton donor is Y146. Position 199 (R199) interacts with (S)-malate. R199 serves as a coordination point for NAD(+). The Proton acceptor role is filled by K217. A divalent metal cation is bound by residues E288, D289, and D312. 2 residues coordinate NAD(+): A348 and A351. (S)-malate is bound by residues N467 and N512.

It belongs to the malic enzymes family. As to quaternary structure, heterodimer of two related subunits. The cofactor is Mg(2+). Requires Mn(2+) as cofactor.

The protein localises to the mitochondrion matrix. It carries out the reaction (S)-malate + NAD(+) = pyruvate + CO2 + NADH. The sequence is that of NAD-dependent malic enzyme, mitochondrial from Solanum tuberosum (Potato).